The sequence spans 425 residues: Tyrosine--tRNA ligase (425 aa).

Y37 lines the L-tyrosine pocket. The 'HIGH' region signature appears at 42-51; the sequence is PTADSLHLGH. Positions 175 and 179 each coordinate L-tyrosine. The 'KMSKS' region signature appears at 235-239; the sequence is KFGKT. K238 provides a ligand contact to ATP. Residues 357–414 enclose the S4 RNA-binding domain; sequence ADLQQALVSAELVPSRGQARTMISSNAVTINGEKQADPEYTFSASDRLFDRYTLLRRG.

It belongs to the class-I aminoacyl-tRNA synthetase family. TyrS type 1 subfamily. As to quaternary structure, homodimer.

The protein resides in the cytoplasm. It carries out the reaction tRNA(Tyr) + L-tyrosine + ATP = L-tyrosyl-tRNA(Tyr) + AMP + diphosphate + H(+). Functionally, catalyzes the attachment of tyrosine to tRNA(Tyr) in a two-step reaction: tyrosine is first activated by ATP to form Tyr-AMP and then transferred to the acceptor end of tRNA(Tyr). This is Tyrosine--tRNA ligase from Pectobacterium carotovorum subsp. carotovorum (strain PC1).